The sequence spans 336 residues: Phosphate acyltransferase (336 aa).

Belongs to the PlsX family. As to quaternary structure, homodimer. Probably interacts with PlsY.

The protein localises to the cytoplasm. It catalyses the reaction a fatty acyl-[ACP] + phosphate = an acyl phosphate + holo-[ACP]. It functions in the pathway lipid metabolism; phospholipid metabolism. Catalyzes the reversible formation of acyl-phosphate (acyl-PO(4)) from acyl-[acyl-carrier-protein] (acyl-ACP). This enzyme utilizes acyl-ACP as fatty acyl donor, but not acyl-CoA. The sequence is that of Phosphate acyltransferase from Pseudomonas putida (strain ATCC 700007 / DSM 6899 / JCM 31910 / BCRC 17059 / LMG 24140 / F1).